A 387-amino-acid polypeptide reads, in one-letter code: S-adenosylmethionine synthase (387 aa).

Histidine 19 lines the ATP pocket. Aspartate 21 contributes to the Mg(2+) binding site. Glutamate 47 is a binding site for K(+). L-methionine is bound at residue glutamine 103. The interval 103-113 (QSPDIAQGVEL) is flexible loop. ATP contacts are provided by residues 167-169 (DMK), 233-234 (RF), aspartate 242, 248-249 (RK), alanine 265, and lysine 269. Aspartate 242 serves as a coordination point for L-methionine. Lysine 273 is an L-methionine binding site.

It belongs to the AdoMet synthase family. In terms of assembly, homotetramer; dimer of dimers. Mg(2+) is required as a cofactor. K(+) serves as cofactor.

Its subcellular location is the cytoplasm. It catalyses the reaction L-methionine + ATP + H2O = S-adenosyl-L-methionine + phosphate + diphosphate. Its pathway is amino-acid biosynthesis; S-adenosyl-L-methionine biosynthesis; S-adenosyl-L-methionine from L-methionine: step 1/1. Functionally, catalyzes the formation of S-adenosylmethionine (AdoMet) from methionine and ATP. The overall synthetic reaction is composed of two sequential steps, AdoMet formation and the subsequent tripolyphosphate hydrolysis which occurs prior to release of AdoMet from the enzyme. The sequence is that of S-adenosylmethionine synthase from Mycoplasma capricolum subsp. capricolum (strain California kid / ATCC 27343 / NCTC 10154).